A 146-amino-acid polypeptide reads, in one-letter code: Large ribosomal subunit protein uL15 (146 aa).

Positions 1-39 (MTLKLHNLRPAPGAKTAKTRVGRGEGSKGKTAGRGTKGT) are disordered.

This sequence belongs to the universal ribosomal protein uL15 family. As to quaternary structure, part of the 50S ribosomal subunit.

Its function is as follows. Binds to the 23S rRNA. The protein is Large ribosomal subunit protein uL15 of Nocardioides sp. (strain ATCC BAA-499 / JS614).